The sequence spans 887 residues: Ubiquitin carboxyl-terminal hydrolase 4 (887 aa).

Residues 202 to 328 (KEDSLLLIDV…WIKNGGEIDK (127 aa)) form the Rhodanese domain. 2 disordered regions span residues 358 to 465 (AFPD…PKPP) and 484 to 505 (QKQNRSRSLEPQLPPIPSTLIR). Positions 387–402 (TPPNGSSTLGRINSPV) are enriched in polar residues. Positions 525–885 (VGLENMGNSC…SAYVLFYHRI (361 aa)) constitute a USP domain. The Nucleophile role is filled by cysteine 534. Catalysis depends on histidine 842, which acts as the Proton acceptor.

Belongs to the peptidase C19 family.

Its subcellular location is the cytoplasm. It is found in the late endosome membrane. The enzyme catalyses Thiol-dependent hydrolysis of ester, thioester, amide, peptide and isopeptide bonds formed by the C-terminal Gly of ubiquitin (a 76-residue protein attached to proteins as an intracellular targeting signal).. With respect to regulation, RFU1 is an inhibitor of deubiquitination activity. Ubiquitin thioesterase that acts at the late endosome/prevacuolar compartment to recover ubiquitin from ubiquitinated membrane proteins en route to the vacuole. Also removes ubiquitin from soluble proteins targeted to proteasomes. Is essential to maintain a normal level of free ubiquitin. Required for promoting coordination of DNA replication and avoids DNA overreplication. The protein is Ubiquitin carboxyl-terminal hydrolase 4 (DOA4) of Candida glabrata (strain ATCC 2001 / BCRC 20586 / JCM 3761 / NBRC 0622 / NRRL Y-65 / CBS 138) (Yeast).